Reading from the N-terminus, the 600-residue chain is Proline--tRNA ligase (600 aa).

This sequence belongs to the class-II aminoacyl-tRNA synthetase family. ProS type 1 subfamily. In terms of assembly, homodimer.

Its subcellular location is the cytoplasm. It carries out the reaction tRNA(Pro) + L-proline + ATP = L-prolyl-tRNA(Pro) + AMP + diphosphate. Its function is as follows. Catalyzes the attachment of proline to tRNA(Pro) in a two-step reaction: proline is first activated by ATP to form Pro-AMP and then transferred to the acceptor end of tRNA(Pro). As ProRS can inadvertently accommodate and process non-cognate amino acids such as alanine and cysteine, to avoid such errors it has two additional distinct editing activities against alanine. One activity is designated as 'pretransfer' editing and involves the tRNA(Pro)-independent hydrolysis of activated Ala-AMP. The other activity is designated 'posttransfer' editing and involves deacylation of mischarged Ala-tRNA(Pro). The misacylated Cys-tRNA(Pro) is not edited by ProRS. This chain is Proline--tRNA ligase, found in Prochlorococcus marinus (strain MIT 9301).